Here is a 145-residue protein sequence, read N- to C-terminus: Globin (145 aa).

At serine 2 the chain carries N-acetylserine. The region spanning 2 to 145 is the Globin domain; that stretch reads SLSAAEADLV…IVAALKAAGK (144 aa). Histidine 96 is a binding site for heme b.

It belongs to the globin family. As to quaternary structure, monomer.

This is Globin from Aplysia kurodai (Kuroda's sea hare).